The primary structure comprises 144 residues: Large ribosomal subunit protein eL27 (144 aa).

The KOW domain maps to 6-43 (IKPGRLVILLNGKYAGRKAVVIKTFDDATASKSRPYGH).

This sequence belongs to the eukaryotic ribosomal protein eL27 family.

In Dictyostelium discoideum (Social amoeba), this protein is Large ribosomal subunit protein eL27 (rpl27).